The sequence spans 297 residues: Ectoine dioxygenase (297 aa).

Glutamine 131 lines the L-ectoine pocket. Lysine 137 lines the 2-oxoglutarate pocket. The Fe cation site is built by histidine 148, aspartate 150, and histidine 249.

The protein belongs to the PhyH family. EctD subfamily. In terms of assembly, homodimer. Requires Fe(2+) as cofactor.

The enzyme catalyses L-ectoine + 2-oxoglutarate + O2 = 5-hydroxyectoine + succinate + CO2. In terms of biological role, involved in the biosynthesis of 5-hydroxyectoine, called compatible solute, which helps organisms to survive extreme osmotic stress by acting as a highly soluble organic osmolyte. Catalyzes the 2-oxoglutarate-dependent selective hydroxylation of L-ectoine to yield (4S,5S)-5-hydroxyectoine. The sequence is that of Ectoine dioxygenase from Streptomyces anulatus (Streptomyces chrysomallus).